The following is a 143-amino-acid chain: MAKKIVGFIKLQVPAGKANPSPPIGPALGQRGLNIMEFCKAFNAQTQGIEPGLKLPVVITAYADKSFTFILKSPPASVLLKKAAKIDKGSPRPHLEKVAKLTRAQLEEIAKIKVKDLTAANMDAAVRTIAGSARSMGINVEGV.

It belongs to the universal ribosomal protein uL11 family. Part of the ribosomal stalk of the 50S ribosomal subunit. Interacts with L10 and the large rRNA to form the base of the stalk. L10 forms an elongated spine to which L12 dimers bind in a sequential fashion forming a multimeric L10(L12)X complex. Post-translationally, one or more lysine residues are methylated.

Forms part of the ribosomal stalk which helps the ribosome interact with GTP-bound translation factors. This is Large ribosomal subunit protein uL11 from Leptothrix cholodnii (strain ATCC 51168 / LMG 8142 / SP-6) (Leptothrix discophora (strain SP-6)).